A 283-amino-acid polypeptide reads, in one-letter code: Gap junction beta-1 protein (283 aa).

Over 1–22 (MNWTGLYTLLSGVNRHSTAIGR) the chain is Cytoplasmic. A helical transmembrane segment spans residues 23–45 (VWLSVIFIFRIMVLVVAAESVWG). The Extracellular portion of the chain corresponds to 46-75 (DEKSSFICNTLQPGCNSVCYDQFFPISHVR). Residues 76–95 (LWSLQLILVSTPALLVAMHV) traverse the membrane as a helical segment. Residues 96–130 (AHQQHIEKKMLRLEGHGDPLHLEEVKRHKVHISGT) are Cytoplasmic-facing. Residues 131–153 (LWWAYVISVVFRLLFEAVFMYVF) traverse the membrane as a helical segment. The Extracellular segment spans residues 154 to 191 (YLLYPGYAMVRLVKCDVYPCPNTVDCFVSRPTEKTVFT). The helical transmembrane segment at 192–214 (VFMLAASGICIILNVAEVVYLII) threads the bilayer. Topologically, residues 215–283 (RACARRAQRR…AEKSDRCSAC (69 aa)) are cytoplasmic. 4 positions are modified to phosphoserine: serine 233, serine 258, serine 266, and serine 277.

This sequence belongs to the connexin family. Beta-type (group I) subfamily. A connexon is composed of a hexamer of connexins. Interacts with CNST.

It localises to the cell membrane. The protein localises to the cell junction. It is found in the gap junction. In terms of biological role, one gap junction consists of a cluster of closely packed pairs of transmembrane channels, the connexons, through which materials of low MW diffuse from one cell to a neighboring cell. In Macaca fascicularis (Crab-eating macaque), this protein is Gap junction beta-1 protein (GJB1).